Consider the following 863-residue polypeptide: Linoleate 9S-lipoxygenase 1 (863 aa).

The 127-residue stretch at 32-158 folds into the PLAT domain; it reads RDFTASLLDN…KYHYNRIFFA (127 aa). Residues 161 to 863 form the Lipoxygenase domain; that stretch reads SYLPSQMPEA…ARGIPNSISI (703 aa). The interval 204–244 is disordered; it reads NDLGEPDRDNPRPVLGGSQKHPYPRRGRTGRIPTKKDPNSE. Positions 518, 523, 709, 713, and 863 each coordinate Fe cation.

It belongs to the lipoxygenase family. Monomer. Fe cation is required as a cofactor.

The protein localises to the cytoplasm. It catalyses the reaction (9Z,12Z)-octadecadienoate + O2 = (9S)-hydroperoxy-(10E,12Z)-octadecadienoate. The protein operates within lipid metabolism; oxylipin biosynthesis. Functionally, plant lipoxygenase may be involved in a number of diverse aspects of plant physiology including growth and development, pest resistance, and senescence or responses to wounding. This lipoxygenase introduces molecular oxygen exclusively into the C-9 position of linoleic and linolenic. This Oryza sativa subsp. japonica (Rice) protein is Linoleate 9S-lipoxygenase 1.